The chain runs to 369 residues: MFCVAPPELETKMNITKGGLVLFSANSNSSCMELSKKIAERLGVEMGKVQVYQEPNRETRVQIQESVRGKDVFIIQTVSKDVNTTIMELLIMVYACKTSCAKSIIGVIPYFPYSKQCKMRKRGSIVSKLLASMMCKAGLTHLITMDLHQKEIQGFFNIPVDNLRASPFLLQYIQEEIPDYRNAVIVAKSPASAKRAQSFAERLRLGIAVIHGEAQDAESDLVDGRHSPPMVRSVAAIHPSLEIPMLIPKEKPPITVVGDVGGRIAIIVDDIIDDVDSFLAAAETLKERGAYKIFVMATHGLLSSDAPRLIEESAIDEVVVTNTIPHEIQKLQCPKIKTVDISMILSEAIRRIHNGESMSYLFRNIGLDD.

Residue methionine 1 is modified to N-acetylmethionine. A phosphoserine mark is found at serine 219, serine 227, and serine 233.

The protein belongs to the ribose-phosphate pyrophosphokinase family. As to quaternary structure, binds to PRPS1 and PRPS2. Ubiquitous.

In terms of biological role, seems to play a negative regulatory role in 5-phosphoribose 1-diphosphate synthesis. In Rattus norvegicus (Rat), this protein is Phosphoribosyl pyrophosphate synthase-associated protein 2 (Prpsap2).